A 1652-amino-acid chain; its full sequence is Venom factor (1652 aa).

The signal sequence occupies residues 1-22 (MEGMALYLVAALLIGFPASSFG). Positions 519, 542, 543, and 545 each coordinate Mg(2+). 12 cysteine pairs are disulfide-bonded: Cys547-Cys808, Cys616-Cys651, Cys684-Cys711, Cys685-Cys718, Cys698-Cys719, Cys864-Cys1502, Cys1347-Cys1478, Cys1378-Cys1447, Cys1495-Cys1500, Cys1507-Cys1579, Cys1526-Cys1650, and Cys1626-Cys1635. The propeptide occupies 657–740 (RRRRRSVVLL…REDELFLARS (84 aa)). The segment at 661–739 (RSVVLLDSKA…KREDELFLAR (79 aa)) is C3a-like domain. The region spanning 684-719 (CCEDGMHENPMGYSCEKREKYIQEGDACKAAFLECC) is the Anaphylatoxin-like domain. The segment at 743–754 (EDEFFGEDNIIS) is factor B binding site. Positions 992–1270 (HLIITPSGCG…VVGFQGLAEY (279 aa)) are excised as a propeptide. Residues 992–1270 (HLIITPSGCG…VVGFQGLAEY (279 aa)) form a C3d-like domain region. Positions 1000-1003 (CGEQ) form a cross-link, isoglutamyl cysteine thioester (Cys-Gln). The interval 1197–1260 (VLMAASTERN…GGTYGQTQAT (64 aa)) is factor H binding site. The NTR domain maps to 1507–1650 (CSLLNQQKKI…LSNTLTIFGC (144 aa)).

It belongs to the venom complement C3 homolog family. As to quaternary structure, heterotrimer of alpha, beta and gamma chains; disulfide-linked. Is active with factor B in the presence of factor D. Post-translationally, first processed by the removal of 4 Arg residues by furin-type protease, forming two chains, alpha and gamma/beta precursor, linked by a disulfide bond. Probably, a cobrin-like protease cleaves the C3a-like domain and then the C3d-like domain, generating the mature venom factor (VF). As to expression, expressed by the venom gland.

It is found in the secreted. Complement-activating protein in venom. It is a structural and functional analog of complement component C3b, the activated form of C3. It binds factor B (CFB), which is subsequently cleaved by factor D (CFD) to form the bimolecular complex VF/Bb. VF/Bb is a C3/C5 convertase that cleaves both complement components C3 and C5. Structurally, it resembles the C3b degradation product C3c, which is not able to form a C3/C5 convertase. Unlike C3b/Bb, VF/Bb is a stable complex and completely resistant to the actions of complement regulatory factors H (CFH) and I (CFI). Therefore, VF continuously activates complement resulting in the depletion of complement activity. The protein is Venom factor of Crotalus adamanteus (Eastern diamondback rattlesnake).